The primary structure comprises 360 residues: MLVWLAEHLVKYYSGFNVFSYLTFRAIVSLLTALFISLWMGPRLIAHLQKLSFGQVVRNDGPESHFSKRGTPTMGGIMILTSIVVSVLLWAYPSNPYVWCVLFVLVGYGAVGFVDDYRKVVRKDTKGLIARWKYFWMSLIALTVAFALYITGKGTPATELVVPFFKDVMPQLGIFYVLLAYFVIVGTGNAVNLTDGLDGLAIMPTVLVAGGFALVAWATGNMNFASYLHIPYLRHAGELVIVCTAIVGAGLGFLWFNTYPAQVFMGDVGSLALGGALGIIAVLLRQEFLLVIMGGVFVVETLSVILQVGSFKLRGQRIFRMAPIHHHYELKGWPEPRVIVRFWVISLMLVLIGLATLKVR.

10 helical membrane-spanning segments follow: residues 26 to 46, 72 to 92, 94 to 114, 132 to 152, 168 to 188, 199 to 219, 236 to 256, 263 to 283, 288 to 308, and 338 to 358; these read AIVS…RLIA, PTMG…LWAY, SNPY…VGFV, WKYF…YITG, VMPQ…VGTG, GLAI…AWAT, AGEL…FLWF, VFMG…IAVL, FLLV…ILQV, and VIVR…ATLK.

This sequence belongs to the glycosyltransferase 4 family. MraY subfamily. Requires Mg(2+) as cofactor.

The protein resides in the cell inner membrane. It carries out the reaction UDP-N-acetyl-alpha-D-muramoyl-L-alanyl-gamma-D-glutamyl-meso-2,6-diaminopimeloyl-D-alanyl-D-alanine + di-trans,octa-cis-undecaprenyl phosphate = di-trans,octa-cis-undecaprenyl diphospho-N-acetyl-alpha-D-muramoyl-L-alanyl-D-glutamyl-meso-2,6-diaminopimeloyl-D-alanyl-D-alanine + UMP. It participates in cell wall biogenesis; peptidoglycan biosynthesis. Catalyzes the initial step of the lipid cycle reactions in the biosynthesis of the cell wall peptidoglycan: transfers peptidoglycan precursor phospho-MurNAc-pentapeptide from UDP-MurNAc-pentapeptide onto the lipid carrier undecaprenyl phosphate, yielding undecaprenyl-pyrophosphoryl-MurNAc-pentapeptide, known as lipid I. In Cronobacter sakazakii (strain ATCC BAA-894) (Enterobacter sakazakii), this protein is Phospho-N-acetylmuramoyl-pentapeptide-transferase.